The sequence spans 147 residues: Transmembrane protein 210 (147 aa).

Residues 1 to 31 (MAPGPWPVSCLRGGPLGLTYLSLLLIPAAAG) form the signal peptide. The Extracellular portion of the chain corresponds to 32-47 (TYCECSLGLSREALIA). The chain crosses the membrane as a helical span at residues 48-68 (LLVVLAGISASCFCALVIVAI). The Cytoplasmic portion of the chain corresponds to 69 to 147 (GVLRAKGETC…PPPPPPLPPE (79 aa)). The disordered stretch occupies residues 128-147 (AIPMEASSEEPPPPPPLPPE). Residues 137 to 147 (EPPPPPPLPPE) are compositionally biased toward pro residues.

It localises to the membrane. The protein localises to the cytoplasmic vesicle. Its subcellular location is the secretory vesicle. It is found in the acrosome. The protein is Transmembrane protein 210 (TMEM210) of Homo sapiens (Human).